The primary structure comprises 358 residues: 3-dehydroquinate synthase (358 aa).

Residues 70–75, 104–108, 128–129, Lys141, Lys150, and 168–171 each bind NAD(+); these read DGEQFK, GVIGD, TT, and CLHT. Zn(2+) is bound by residues Glu183, His246, and His263.

This sequence belongs to the sugar phosphate cyclases superfamily. Dehydroquinate synthase family. The cofactor is Co(2+). Zn(2+) serves as cofactor. NAD(+) is required as a cofactor.

The protein localises to the cytoplasm. It carries out the reaction 7-phospho-2-dehydro-3-deoxy-D-arabino-heptonate = 3-dehydroquinate + phosphate. It participates in metabolic intermediate biosynthesis; chorismate biosynthesis; chorismate from D-erythrose 4-phosphate and phosphoenolpyruvate: step 2/7. Functionally, catalyzes the conversion of 3-deoxy-D-arabino-heptulosonate 7-phosphate (DAHP) to dehydroquinate (DHQ). This is 3-dehydroquinate synthase from Shewanella baltica (strain OS155 / ATCC BAA-1091).